An 878-amino-acid chain; its full sequence is Calcium-transporting ATPase 1 (878 aa).

The next 4 membrane-spanning stretches (helical) occupy residues 50–72, 76–95, 243–263, and 281–301; these read LFID…VQLF, FVES…VAVV, LGWV…LRLF, and FAVA…VTIV. Ca(2+)-binding residues include valine 287, alanine 288, isoleucine 290, and glutamate 292. Aspartate 334 (4-aspartylphosphate intermediate) is an active-site residue. 6 helical membrane-spanning segments follow: residues 681-701, 704-724, 753-773, 779-799, 816-836, and 845-865; these read LFSG…VGWV, FTAL…AIAL, VILI…YVGQ, MGVA…TFAA, YVLM…LPFL, and AFGW…VICM. Asparagine 713 and aspartate 717 together coordinate Ca(2+).

It belongs to the cation transport ATPase (P-type) (TC 3.A.3) family. Type IIA subfamily.

Its subcellular location is the cell membrane. The catalysed reaction is Ca(2+)(in) + ATP + H2O = Ca(2+)(out) + ADP + phosphate + H(+). Its activity is regulated as follows. Inhibited by very high concentrations of cyclopiazonic acid (CPA). In terms of biological role, catalyzes the hydrolysis of ATP coupled with the transport of calcium. The polypeptide is Calcium-transporting ATPase 1 (yoaB) (Lactococcus lactis subsp. lactis (strain IL1403) (Streptococcus lactis)).